The following is a 97-amino-acid chain: Large ribosomal subunit protein bL27 (97 aa).

Positions 1 to 21 (MAHKKGVGSSRNGRDSNPKYR) are disordered.

Belongs to the bacterial ribosomal protein bL27 family.

This chain is Large ribosomal subunit protein bL27, found in Gemmatimonas aurantiaca (strain DSM 14586 / JCM 11422 / NBRC 100505 / T-27).